Consider the following 713-residue polypeptide: Cytosolic endo-beta-N-acetylglucosaminidase (713 aa).

The tract at residues 1 to 36 is disordered; that stretch reads MIARKRKSNGSETTSGKIPKDDVSSESCLDQPADES. A BRCT domain is found at 270–362; sequence FFDACDGFFT…DFRQNQDKFW (93 aa).

This sequence belongs to the glycosyl hydrolase 85 family.

The protein localises to the cytoplasm. It localises to the cytosol. The catalysed reaction is an N(4)-(oligosaccharide-(1-&gt;3)-[oligosaccharide-(1-&gt;6)]-beta-D-Man-(1-&gt;4)-beta-D-GlcNAc-(1-&gt;4)-alpha-D-GlcNAc)-L-asparaginyl-[protein] + H2O = an oligosaccharide-(1-&gt;3)-[oligosaccharide-(1-&gt;6)]-beta-D-Man-(1-&gt;4)-D-GlcNAc + N(4)-(N-acetyl-beta-D-glucosaminyl)-L-asparaginyl-[protein]. Functionally, endoglycosidase that releases N-glycans from glycoproteins by cleaving the beta-1,4-glycosidic bond in the N,N'-diacetylchitobiose core. Involved in the processing of free oligosaccharides in the cytosol. In Danio rerio (Zebrafish), this protein is Cytosolic endo-beta-N-acetylglucosaminidase (engase).